A 135-amino-acid polypeptide reads, in one-letter code: Methylglyoxal synthase (135 aa).

The region spanning Met-1–Phe-135 is the MGS-like domain. Substrate is bound by residues His-10, Lys-14, Thr-36–Thr-39, and Ser-56–Gly-57. Asp-62 serves as the catalytic Proton donor/acceptor. His-89 contacts substrate.

This sequence belongs to the methylglyoxal synthase family.

The catalysed reaction is dihydroxyacetone phosphate = methylglyoxal + phosphate. Catalyzes the formation of methylglyoxal from dihydroxyacetone phosphate. The polypeptide is Methylglyoxal synthase (Pseudoalteromonas atlantica (strain T6c / ATCC BAA-1087)).